The primary structure comprises 467 residues: Rhamnulokinase (467 aa).

Residue 11–15 (ASSGR) participates in ATP binding. Residues alanine 78 and 235–237 (HDT) contribute to the substrate site. Aspartate 236 functions as the Proton acceptor in the catalytic mechanism. Threonine 257 is an ATP binding site. Asparagine 294 is a substrate binding site. Glutamine 302 serves as a coordination point for ATP. Cysteines 351 and 368 form a disulfide. Position 400 (glycine 400) interacts with ATP.

This sequence belongs to the rhamnulokinase family. The cofactor is Mg(2+).

It carries out the reaction L-rhamnulose + ATP = L-rhamnulose 1-phosphate + ADP + H(+). It participates in carbohydrate degradation; L-rhamnose degradation; glycerone phosphate from L-rhamnose: step 2/3. Functionally, involved in the catabolism of L-rhamnose (6-deoxy-L-mannose). Catalyzes the transfer of the gamma-phosphate group from ATP to the 1-hydroxyl group of L-rhamnulose to yield L-rhamnulose 1-phosphate. The polypeptide is Rhamnulokinase (Halalkalibacterium halodurans (strain ATCC BAA-125 / DSM 18197 / FERM 7344 / JCM 9153 / C-125) (Bacillus halodurans)).